A 314-amino-acid chain; its full sequence is WD repeat domain-containing protein 83 (314 aa).

7 WD repeats span residues 23–62 (CNQG…LLKT), 65–104 (GHGY…VVRK), 107–146 (GHAG…PDAI), 151–188 (EAKD…MCAD), 189–228 (YLGS…LLGE), 231–272 (GHQN…LVLK), and 275–313 (VGKA…EEGG).

It belongs to the WD repeat MORG1 family.

The protein localises to the cytoplasm. Functionally, molecular scaffold protein for various multimeric protein complexes. Acts as a module in the assembly of a multicomponent scaffold for the ERK pathway, linking ERK responses to specific agonists. Also involved in response to hypoxia by acting as a negative regulator of HIF1A/HIF-1-alpha. This Xenopus laevis (African clawed frog) protein is WD repeat domain-containing protein 83 (wdr83).